We begin with the raw amino-acid sequence, 374 residues long: C-C chemokine receptor type 6 (374 aa).

Over 1-47 (MSGESMNFSDVFDSSEDYFVSVNTSYYSVDSEMLLCSLQEVRQFSRL) the chain is Extracellular. N-linked (GlcNAc...) asparagine glycans are attached at residues N7 and N23. Residues 48–74 (FVPIAYSLICVFGLLGNILVVITFAFY) form a helical membrane-spanning segment. The Cytoplasmic segment spans residues 75 to 83 (KKARSMTDV). The chain crosses the membrane as a helical span at residues 84 to 104 (YLLNMAIADILFVLTLPFWAV). Over 105–119 (SHATGAWVFSNATCK) the chain is Extracellular. Cysteines 118 and 197 form a disulfide. Residues 120-141 (LLKGIYAINFNCGMLLLTCISM) traverse the membrane as a helical segment. Topologically, residues 142-159 (DRYIAIVQATKSFRLRSR) are cytoplasmic. The helical transmembrane segment at 160–180 (TLPRSKIICLVVWGLSVIISS) threads the bilayer. The Extracellular portion of the chain corresponds to 181 to 211 (STFVFNQKYNTQGSDVCEPKYQTVSEPIRWK). Residues 212 to 238 (LLMLGLELLFGFFIPLMFMIFCYTFIV) traverse the membrane as a helical segment. Residues 239 to 254 (KTLVQAQNSKRHKAIR) are Cytoplasmic-facing. Residues 255-279 (VIIAVVLVFLACQIPHNMVLLVTAA) form a helical membrane-spanning segment. The Extracellular portion of the chain corresponds to 280-303 (NLGKMNRSCQSEKLIGYTKTVTEV). A helical membrane pass occupies residues 304 to 321 (LAFLHCCLNPVLYAFIGQ). The Cytoplasmic segment spans residues 322–374 (KFRNYFLKILKDLWCVRRKYKSSGFSCAGRYSENISRQTSETADNDNASSFTM).

It belongs to the G-protein coupled receptor 1 family. As to expression, sperm. Mainly localized in the tail and in the postacrosomal region but is also found in the midpiece and basal region in a small percentage of sperm cells. Reduced levels found in the sperms of asthenozoospermia and leukocytospermia patients (at protein level). Spleen, lymph nodes, appendix, and fetal liver. Expressed in lymphocytes, T-cells and B-cells but not in natural killer cells, monocytes or granulocytes.

It localises to the cell membrane. The protein resides in the cell surface. Receptor for the C-C type chemokine CCL20. Binds to CCL20 and subsequently transduces a signal by increasing the intracellular calcium ion levels. Although CCL20 is its major ligand it can also act as a receptor for non-chemokine ligands such as beta-defensins. Binds to defensin DEFB1 leading to increase in intracellular calcium ions and cAMP levels. Its binding to DEFB1 is essential for the function of DEFB1 in regulating sperm motility and bactericidal activity. Binds to defensins DEFB4 and DEFB4A/B and mediates their chemotactic effects. The ligand-receptor pair CCL20-CCR6 is responsible for the chemotaxis of dendritic cells (DC), effector/ memory T-cells and B-cells and plays an important role at skin and mucosal surfaces under homeostatic and inflammatory conditions, as well as in pathology, including cancer and various autoimmune diseases. CCR6-mediated signals are essential for immune responses to microbes in the intestinal mucosa and in the modulation of inflammatory responses initiated by tissue insult and trauma. CCR6 is essential for the recruitment of both the pro-inflammatory IL17 producing helper T-cells (Th17) and the regulatory T-cells (Treg) to sites of inflammation. Required for the normal migration of Th17 cells in Peyers-patches and other related tissue sites of the intestine and plays a role in regulating effector T-cell balance and distribution in inflamed intestine. Plays an important role in the coordination of early thymocyte precursor migration events important for normal subsequent thymocyte precursor development, but is not required for the formation of normal thymic natural regulatory T-cells (nTregs). Required for optimal differentiation of DN2 and DN3 thymocyte precursors. Essential for B-cell localization in the subepithelial dome of Peyers-patches and for efficient B-cell isotype switching to IgA in the Peyers-patches. Essential for appropriate anatomical distribution of memory B-cells in the spleen and for the secondary recall response of memory B-cells. Positively regulates sperm motility and chemotaxis via its binding to CCL20. The polypeptide is C-C chemokine receptor type 6 (CCR6) (Homo sapiens (Human)).